We begin with the raw amino-acid sequence, 845 residues long: U-box domain-containing protein 52 (845 aa).

2 disordered regions span residues R180–E210 and S229–T258. Residues S187–S204 show a composition bias toward low complexity. The segment covering M236–T251 has biased composition (polar residues). Residues S351–L468 are a coiled coil. Residues F490 to L754 enclose the Protein kinase domain. Residues I496–V504 and K517 contribute to the ATP site. D612 acts as the Proton acceptor in catalysis. A U-box domain is found at G774 to R845.

This sequence belongs to the protein kinase superfamily. Ser/Thr protein kinase family.

The enzyme catalyses L-seryl-[protein] + ATP = O-phospho-L-seryl-[protein] + ADP + H(+). It carries out the reaction L-threonyl-[protein] + ATP = O-phospho-L-threonyl-[protein] + ADP + H(+). The catalysed reaction is S-ubiquitinyl-[E2 ubiquitin-conjugating enzyme]-L-cysteine + [acceptor protein]-L-lysine = [E2 ubiquitin-conjugating enzyme]-L-cysteine + N(6)-ubiquitinyl-[acceptor protein]-L-lysine.. Its pathway is protein modification; protein ubiquitination. Its function is as follows. Functions as an E3 ubiquitin ligase. In Arabidopsis thaliana (Mouse-ear cress), this protein is U-box domain-containing protein 52 (PUB52).